The chain runs to 296 residues: Nucleotide-binding protein M28_Spy0517 (296 aa).

Position 13 to 20 (13 to 20 (GMSGAGKT)) interacts with ATP. 63–66 (DMRS) lines the GTP pocket.

This sequence belongs to the RapZ-like family.

Its function is as follows. Displays ATPase and GTPase activities. This is Nucleotide-binding protein M28_Spy0517 from Streptococcus pyogenes serotype M28 (strain MGAS6180).